A 125-amino-acid polypeptide reads, in one-letter code: MNAKRPVNLDLTKFHFPPMAILSIGHRISGFVLFLCMPLMFYLLHRATASAESFYHLHQLLLHNGWIKLAVWIMLSATLFHLFAGIRHLAMDLGFWESVPEGRISAYTVFVVSFIAIVLAGVWIW.

Residues Met1–Leu22 lie on the Cytoplasmic side of the membrane. A helical membrane pass occupies residues Ser23 to Thr48. The Periplasmic portion of the chain corresponds to Ala49–Gly65. The helical transmembrane segment at Trp66–Ile86 threads the bilayer. Residue His81 coordinates heme. At Arg87 to Ile104 the chain is on the cytoplasmic side. The chain crosses the membrane as a helical span at residues Ser105 to Trp125.

This sequence belongs to the cytochrome b560 family. In terms of assembly, part of an enzyme complex containing four subunits: a flavoprotein, an iron-sulfur protein, plus two membrane-anchoring proteins, SdhC and SdhD. The complex can form homotrimers. Requires heme as cofactor.

The protein localises to the cell inner membrane. It participates in carbohydrate metabolism; tricarboxylic acid cycle. Functionally, membrane-anchoring subunit of succinate dehydrogenase (SDH). This is Succinate dehydrogenase cytochrome b556 subunit (sdhC) from Coxiella burnetii (strain RSA 493 / Nine Mile phase I).